Consider the following 108-residue polypeptide: Putative membrane protein insertion efficiency factor (108 aa).

Belongs to the UPF0161 family.

The protein localises to the cell inner membrane. Its function is as follows. Could be involved in insertion of integral membrane proteins into the membrane. The sequence is that of Putative membrane protein insertion efficiency factor from Chelativorans sp. (strain BNC1).